A 182-amino-acid polypeptide reads, in one-letter code: Protein LIGHT-DEPENDENT SHORT HYPOCOTYLS 5 (182 aa).

The segment covering 1 to 16 has biased composition (low complexity); sequence MEGETAAKAAASSSSS. Disordered stretches follow at residues 1–22 and 138–168; these read MEGE…RYES and ARGI…DAEG. The 129-residue stretch at 19–147 folds into the ALOG domain; the sequence is RYESQKRRDW…ARGIPYDKKK (129 aa). Residues 145–149 carry the Nuclear localization signal motif; that stretch reads KKKRK.

It belongs to the plant homeotic and developmental regulators ALOG protein family.

It is found in the nucleus. Probable transcription regulator that acts as a developmental regulator by promoting cell growth in response to light. This is Protein LIGHT-DEPENDENT SHORT HYPOCOTYLS 5 (LSH5) from Arabidopsis thaliana (Mouse-ear cress).